A 385-amino-acid chain; its full sequence is tRNA 2-selenouridine synthase (385 aa).

The 124-residue stretch at 15 to 138 (FIADTPLIDV…ARQFLISTID (124 aa)) folds into the Rhodanese domain. The S-selanylcysteine intermediate role is filled by Cys98.

This sequence belongs to the SelU family. Monomer.

The enzyme catalyses 5-methylaminomethyl-2-thiouridine(34) in tRNA + selenophosphate + (2E)-geranyl diphosphate + H2O + H(+) = 5-methylaminomethyl-2-selenouridine(34) in tRNA + (2E)-thiogeraniol + phosphate + diphosphate. It carries out the reaction 5-methylaminomethyl-2-thiouridine(34) in tRNA + (2E)-geranyl diphosphate = 5-methylaminomethyl-S-(2E)-geranyl-thiouridine(34) in tRNA + diphosphate. It catalyses the reaction 5-methylaminomethyl-S-(2E)-geranyl-thiouridine(34) in tRNA + selenophosphate + H(+) = 5-methylaminomethyl-2-(Se-phospho)selenouridine(34) in tRNA + (2E)-thiogeraniol. The catalysed reaction is 5-methylaminomethyl-2-(Se-phospho)selenouridine(34) in tRNA + H2O = 5-methylaminomethyl-2-selenouridine(34) in tRNA + phosphate. Its function is as follows. Involved in the post-transcriptional modification of the uridine at the wobble position (U34) of tRNA(Lys), tRNA(Glu) and tRNA(Gln). Catalyzes the conversion of 2-thiouridine (S2U-RNA) to 2-selenouridine (Se2U-RNA). Acts in a two-step process involving geranylation of 2-thiouridine (S2U) to S-geranyl-2-thiouridine (geS2U) and subsequent selenation of the latter derivative to 2-selenouridine (Se2U) in the tRNA chain. The protein is tRNA 2-selenouridine synthase of Nitrosomonas europaea (strain ATCC 19718 / CIP 103999 / KCTC 2705 / NBRC 14298).